Reading from the N-terminus, the 231-residue chain is Fibrillarin-like rRNA/tRNA 2'-O-methyltransferase (231 aa).

Residues threonine 89 to threonine 90, glutamate 108 to phenylalanine 109, aspartate 133 to alanine 134, and aspartate 153 to glutamine 156 contribute to the S-adenosyl-L-methionine site.

Belongs to the methyltransferase superfamily. Fibrillarin family. In terms of assembly, interacts with nop5. Component of box C/D small ribonucleoprotein (sRNP) particles that contain rpl7ae, FlpA and nop5, plus a guide RNA.

Its function is as follows. Involved in pre-rRNA and tRNA processing. Utilizes the methyl donor S-adenosyl-L-methionine to catalyze the site-specific 2'-hydroxyl methylation of ribose moieties in rRNA and tRNA. Site specificity is provided by a guide RNA that base pairs with the substrate. Methylation occurs at a characteristic distance from the sequence involved in base pairing with the guide RNA. The protein is Fibrillarin-like rRNA/tRNA 2'-O-methyltransferase of Sulfolobus acidocaldarius (strain ATCC 33909 / DSM 639 / JCM 8929 / NBRC 15157 / NCIMB 11770).